A 47-amino-acid polypeptide reads, in one-letter code: Large ribosomal subunit protein bL34 (47 aa).

Belongs to the bacterial ribosomal protein bL34 family.

The sequence is that of Large ribosomal subunit protein bL34 from Mycolicibacterium vanbaalenii (strain DSM 7251 / JCM 13017 / BCRC 16820 / KCTC 9966 / NRRL B-24157 / PYR-1) (Mycobacterium vanbaalenii).